We begin with the raw amino-acid sequence, 552 residues long: 4-coumarate--CoA ligase-like 3 (552 aa).

ATP contacts are provided by serine 207, serine 208, glycine 209, threonine 210, threonine 211, and lysine 215. Phenylalanine 252 contacts (E)-4-coumaroyl-AMP. Residue arginine 273 coordinates CoA. The interval 275-346 (GLDDMMQAVE…EKYPTVNIFQ (72 aa)) is SBD1. Residues glycine 324, glutamine 346, glycine 347, and threonine 351 each coordinate (E)-4-coumaroyl-AMP. Residues glutamine 346, glycine 347, threonine 351, aspartate 432, and arginine 447 each coordinate ATP. Residues 347-411 (GYALTESHGS…LKGPSISKGY (65 aa)) form an SBD2 region. Positions 449 and 453 each coordinate (E)-4-coumaroyl-AMP. CoA is bound by residues lysine 455 and glycine 456. Lysine 538 lines the ATP pocket. The Microbody targeting signal motif lies at 550–552 (SKL).

It belongs to the ATP-dependent AMP-binding enzyme family. Mg(2+) serves as cofactor.

The protein resides in the peroxisome. The catalysed reaction is (E)-4-coumarate + ATP + CoA = (E)-4-coumaroyl-CoA + AMP + diphosphate. It carries out the reaction (E)-4-coumarate + ATP + H(+) = (E)-4-coumaroyl-AMP + diphosphate. The enzyme catalyses (E)-4-coumaroyl-AMP + CoA = (E)-4-coumaroyl-CoA + AMP + H(+). Carboxylate--CoA ligase that may use 4-coumarate as substrate. Follows a two-step reaction mechanism, wherein the carboxylate substrate first undergoes adenylation by ATP, followed by a thioesterification in the presence of CoA to yield the final CoA thioester. The protein is 4-coumarate--CoA ligase-like 3 of Arabidopsis thaliana (Mouse-ear cress).